The chain runs to 514 residues: Ribonuclease Y (514 aa).

A helical transmembrane segment spans residues 3–23; sequence YMIIYEIIAGILIVVAILIHF. The region spanning 204-289 is the KH domain; it reads TVHVVTLPND…EMVEKAEKEL (86 aa). Positions 330 to 423 constitute an HD domain; the sequence is VLKHSVEVAY…VQAADAISAA (94 aa).

Belongs to the RNase Y family.

The protein resides in the cell membrane. Its function is as follows. Endoribonuclease that initiates mRNA decay. This chain is Ribonuclease Y, found in Clostridium kluyveri (strain ATCC 8527 / DSM 555 / NBRC 12016 / NCIMB 10680 / K1).